We begin with the raw amino-acid sequence, 207 residues long: Probable flagellin 2 (207 aa).

Positions 1-14 (MRVGSRKLRRDEKG) are excised as a propeptide.

Belongs to the archaeal flagellin family.

It is found in the archaeal flagellum. Its function is as follows. Flagellin is the subunit protein which polymerizes to form the filaments of archaeal flagella. This Archaeoglobus fulgidus (strain ATCC 49558 / DSM 4304 / JCM 9628 / NBRC 100126 / VC-16) protein is Probable flagellin 2 (flaB2).